The chain runs to 251 residues: Probable transcriptional regulatory protein MRA_2631 (251 aa).

It belongs to the TACO1 family.

It localises to the cytoplasm. The polypeptide is Probable transcriptional regulatory protein MRA_2631 (Mycobacterium tuberculosis (strain ATCC 25177 / H37Ra)).